The chain runs to 79 residues: MVEIVAGKQRAPVAAGVYNVYTGELADTATPTAARMGLEPPRFCAQCGRRMVVQVRPDGWWARCSRHGQVDSADLATQR.

This sequence belongs to the BsaP family. Iron-sulfur cluster is required as a cofactor.

Its function is as follows. Required for the activity of the biotin synthase BioB. The protein is Biotin synthase auxiliary protein of Mycobacterium bovis (strain ATCC BAA-935 / AF2122/97).